The primary structure comprises 160 residues: Cyclic pyranopterin monophosphate synthase (160 aa).

Substrate is bound by residues 74 to 76 and 112 to 113; these read LSH and ME. Asp127 is an active-site residue.

The protein belongs to the MoaC family. In terms of assembly, homohexamer; trimer of dimers.

The enzyme catalyses (8S)-3',8-cyclo-7,8-dihydroguanosine 5'-triphosphate = cyclic pyranopterin phosphate + diphosphate. It participates in cofactor biosynthesis; molybdopterin biosynthesis. In terms of biological role, catalyzes the conversion of (8S)-3',8-cyclo-7,8-dihydroguanosine 5'-triphosphate to cyclic pyranopterin monophosphate (cPMP). The sequence is that of Cyclic pyranopterin monophosphate synthase from Pelobacter propionicus (strain DSM 2379 / NBRC 103807 / OttBd1).